Reading from the N-terminus, the 238-residue chain is Probable 2-phosphosulfolactate phosphatase (238 aa).

Belongs to the ComB family. Mg(2+) serves as cofactor.

The catalysed reaction is (2R)-O-phospho-3-sulfolactate + H2O = (2R)-3-sulfolactate + phosphate. The protein is Probable 2-phosphosulfolactate phosphatase of Clostridium botulinum (strain Alaska E43 / Type E3).